The sequence spans 604 residues: Zinc finger protein chinmo (604 aa).

One can recognise a BTB domain in the interval A32–Q98. 4 disordered regions span residues R122–S155, C291–H310, R330–T437, and N450–T470. Residues P364–T374 show a composition bias toward low complexity. A compositionally biased stretch (polar residues) spans A384–L409. The segment covering A425–T437 has biased composition (acidic residues). Residues S461 to T470 are compositionally biased toward low complexity. 2 C2H2-type zinc fingers span residues L517 to H540 and V545 to H568.

Broadly expressed in the developing larval central nervous system (at protein level). Expressed in the larval lymph gland and circulating hemocytes (at protein level). Expressed in all cell types of the adult testis stem cell niche but not detected in somatic cells of the adult ovary (at protein level). In the testis, expressed at high levels in cyst stem cells and early cyst cells and, at lower levels, in germline stem cells (at protein level).

It localises to the nucleus. Required for morphological differentiation of postmitotic neurons during postembryonic brain development. Ensures production of appropriate neuron subtypes within a lineage by preventing precocious generation of late neuronal types of that lineage. Acts as a downstream mediator of the transcriptional activator Stat92e and is required for the development of the eye-antennal disk which gives rise to the adult eye, antenna and head capsule, for transcriptional repression of the Notch receptor ligand Ser and for the self-renewal of cyst stem cells in the testis. In the adult testis, maintains the male identify of adult somatic cyst stem cells. Represses expression and alternative splicing of transformer pre-mRNA, resulting in the production of the male-specific isoform of transcription factor dsx which ensures male-specific transcription of target genes. Plays a role in actin nuclear localization through its involvement in repressing the expression of the kinase Cdi. This maintains the cofilin/actin-depolymerizing factor homolog tsr in its unphosphorylated state which is required for actin nuclear import. The protein is Zinc finger protein chinmo of Drosophila melanogaster (Fruit fly).